The chain runs to 370 residues: Glucan endo-1,3-beta-glucosidase (370 aa).

The signal sequence occupies residues 1–32 (MASFFARTRRFSLVSLFLLELFTINLIPTTDA). Gln-33 is subject to Pyrrolidone carboxylic acid. The active-site Proton donor is Glu-127. Catalysis depends on Glu-272, which acts as the Nucleophile. Residues 348-370 (GERRDGEIVEGDFNGTVSLKSDM) constitute a propeptide, removed in mature form. Asn-361 carries an N-linked (GlcNAc...) asparagine glycan.

This sequence belongs to the glycosyl hydrolase 17 family. As to expression, constitutively expressed in seedling roots.

The catalysed reaction is Hydrolysis of (1-&gt;3)-beta-D-glucosidic linkages in (1-&gt;3)-beta-D-glucans.. Its function is as follows. Implicated in the defense of plants against pathogens. This is Glucan endo-1,3-beta-glucosidase from Pisum sativum (Garden pea).